Here is a 206-residue protein sequence, read N- to C-terminus: Bacterial microcompartment protein trimer-3 (206 aa).

BMC circularly permuted domains lie at 2 to 104 and 105 to 206; these read ELRA…RLAP and RVVS…DNRG. Positions 67 to 68 match the Pore gating residues motif; the sequence is ER.

This sequence belongs to the EutL/PduB family. As to quaternary structure, homotrimerizes to form a pseudohexamer. These stack, with the concave faces together, with the concave faces together, in purified bacterial microcompartments (BMC).

Its subcellular location is the bacterial microcompartment. Functionally, a minor component of the bacterial microcompartment (BMC) shell. Expression of 5 proteins in E.coli (BMC-H (Hoch_5815), BMC-P (Hoch_5814), and 3 BMC-T (Hoch_5812, Hoch_5816, Hoch_3341)) forms 40 nm artificial BMCs with a molecular mass of 6.5 MDa. One of 2 stacked pseudohexamers in the BMC. There are 20 BMC-T pseudohexamers per BMC, composed of mixed BMC-T1, BMC-T2 and BMC-T3. The shell facets are 20-30 Angstroms thick, with 1 of the stacked BMC-T trimers protruding to the exterior. The stacked trimers may serve as conduits to allow metabolite flux across the protein shell, gated by Arg-68 which contacts Glu-67 in an adjacent subunit; they are flexible enough to play a role in accommodating variations in shell assembly. This is Bacterial microcompartment protein trimer-3 from Haliangium ochraceum (strain DSM 14365 / JCM 11303 / SMP-2).